The following is a 137-amino-acid chain: Nucleoside diphosphate kinase (137 aa).

The ATP site is built by K9, F57, R85, T91, R102, and N112. H115 (pros-phosphohistidine intermediate) is an active-site residue.

It belongs to the NDK family. As to quaternary structure, homotetramer. It depends on Mg(2+) as a cofactor.

The protein localises to the cytoplasm. It carries out the reaction a 2'-deoxyribonucleoside 5'-diphosphate + ATP = a 2'-deoxyribonucleoside 5'-triphosphate + ADP. It catalyses the reaction a ribonucleoside 5'-diphosphate + ATP = a ribonucleoside 5'-triphosphate + ADP. Major role in the synthesis of nucleoside triphosphates other than ATP. The ATP gamma phosphate is transferred to the NDP beta phosphate via a ping-pong mechanism, using a phosphorylated active-site intermediate. The polypeptide is Nucleoside diphosphate kinase (Thermus thermophilus (strain ATCC BAA-163 / DSM 7039 / HB27)).